A 183-amino-acid chain; its full sequence is Non-specific lipid transfer protein GPI-anchored 15 (183 aa).

The signal sequence occupies residues 1–24 (MGYRRSYAITFVALVAALWSVTKA). Disulfide bonds link cysteine 30–cysteine 71, cysteine 40–cysteine 55, cysteine 56–cysteine 97, and cysteine 69–cysteine 107. Residues asparagine 47 and asparagine 86 are each glycosylated (N-linked (GlcNAc...) asparagine). Residues 108 to 158 (NAATGPTAQPPAPSPTEKTPDVTLTPTSLPGARSGVGGGSKTVPSVGTGSS) are disordered. The segment covering 149-158 (TVPSVGTGSS) has biased composition (polar residues). Serine 158 carries the GPI-anchor amidated serine lipid modification. The propeptide at 159–183 (SRNVDPLPLHFLMFAVLVVCTSSFL) is removed in mature form.

This sequence belongs to the plant LTP family. As to expression, expressed in seedlings, preferentially in the endodermis of hypocotyls and roots. Also observed in siliques.

It is found in the cell membrane. Its function is as follows. Probable lipid transfer protein. The sequence is that of Non-specific lipid transfer protein GPI-anchored 15 from Arabidopsis thaliana (Mouse-ear cress).